Consider the following 426-residue polypeptide: 4-hydroxy-3-methylbut-2-en-1-yl diphosphate synthase (flavodoxin) (426 aa).

[4Fe-4S] cluster-binding residues include Cys-320, Cys-323, Cys-366, and Glu-373.

The protein belongs to the IspG family. It depends on [4Fe-4S] cluster as a cofactor.

It carries out the reaction (2E)-4-hydroxy-3-methylbut-2-enyl diphosphate + oxidized [flavodoxin] + H2O + 2 H(+) = 2-C-methyl-D-erythritol 2,4-cyclic diphosphate + reduced [flavodoxin]. It participates in isoprenoid biosynthesis; isopentenyl diphosphate biosynthesis via DXP pathway; isopentenyl diphosphate from 1-deoxy-D-xylulose 5-phosphate: step 5/6. Functionally, converts 2C-methyl-D-erythritol 2,4-cyclodiphosphate (ME-2,4cPP) into 1-hydroxy-2-methyl-2-(E)-butenyl 4-diphosphate. This Wolbachia sp. subsp. Drosophila simulans (strain wRi) protein is 4-hydroxy-3-methylbut-2-en-1-yl diphosphate synthase (flavodoxin).